We begin with the raw amino-acid sequence, 93 residues long: Phosphoribosyl-ATP pyrophosphatase (93 aa).

It belongs to the PRA-PH family.

The protein resides in the cytoplasm. It carries out the reaction 1-(5-phospho-beta-D-ribosyl)-ATP + H2O = 1-(5-phospho-beta-D-ribosyl)-5'-AMP + diphosphate + H(+). The protein operates within amino-acid biosynthesis; L-histidine biosynthesis; L-histidine from 5-phospho-alpha-D-ribose 1-diphosphate: step 2/9. This Mycobacterium avium (strain 104) protein is Phosphoribosyl-ATP pyrophosphatase.